We begin with the raw amino-acid sequence, 245 residues long: Fibroblast growth factor 13 (245 aa).

A disordered region spans residues 1-36 (MAAAIASSLIRQKRQAREREKSNACKCVSSPSKGKT). The tract at residues 1–62 (MAAAIASSLI…GSKKRRRRRP (62 aa)) is mediates targeting to the nucleus. Residues 67–201 (KGIVTKLYSR…AHFLPKPLKV (135 aa)) form a mediates interaction with sodium channels region. Phosphoserine is present on S208. The disordered stretch occupies residues 213–245 (TEFSRSGSGTPTKSRSVSGVLNGGKSMSHNEST). The span at 215–245 (FSRSGSGTPTKSRSVSGVLNGGKSMSHNEST) shows a compositional bias: polar residues.

It belongs to the heparin-binding growth factors family. In terms of assembly, interacts with SCN8A; regulates SCN8A activity. Interacts with SCN1A; may regulate SCN1A activity. Interacts with SCN5A; the interaction is direct and may regulate SNC5A density at membranes and function. May also interact with SCN2A and SCN11A. Interacts with MAPK8IP2; may regulate the MAPK8IP2 scaffolding activity. Post-translationally, may be phosphorylated. Ubiquitously expressed. Predominantly expressed in the nervous system.

The protein resides in the nucleus. It is found in the cytoplasm. Its subcellular location is the cell projection. It localises to the filopodium. The protein localises to the growth cone. The protein resides in the dendrite. It is found in the cell membrane. Its subcellular location is the sarcolemma. Its function is as follows. Microtubule-binding protein which directly binds tubulin and is involved in both polymerization and stabilization of microtubules. Through its action on microtubules, may participate in the refinement of axons by negatively regulating axonal and leading processes branching. Plays a crucial role in neuron polarization and migration in the cerebral cortex and the hippocampus. Regulates voltage-gated sodium channel transport and function. May also play a role in MAPK signaling. Required for the development of axonal initial segment-targeting inhibitory GABAergic synapses made by chandelier neurons. This chain is Fibroblast growth factor 13, found in Homo sapiens (Human).